Reading from the N-terminus, the 878-residue chain is DNA mismatch repair protein MutS (878 aa).

630-637 provides a ligand contact to ATP; the sequence is GPNMAGKS.

This sequence belongs to the DNA mismatch repair MutS family.

Its function is as follows. This protein is involved in the repair of mismatches in DNA. It is possible that it carries out the mismatch recognition step. This protein has a weak ATPase activity. This is DNA mismatch repair protein MutS from Chlorobaculum tepidum (strain ATCC 49652 / DSM 12025 / NBRC 103806 / TLS) (Chlorobium tepidum).